A 180-amino-acid polypeptide reads, in one-letter code: Kappa-casein (180 aa).

Positions 1–21 are cleaved as a signal peptide; the sequence is MMKHFLLVVNILAVTLPFLAA. 4 O-linked (GalNAc...) threonine glycosylation sites follow: threonine 132, threonine 142, threonine 147, and threonine 153. Serine 160 bears the Phosphoserine; alternate mark. O-linked (GalNAc...) serine; alternate glycosylation is present at serine 160.

This sequence belongs to the kappa-casein family. As to expression, mammary gland specific. Secreted in milk.

It is found in the secreted. Kappa-casein stabilizes micelle formation, preventing casein precipitation in milk. This Oryctolagus cuniculus (Rabbit) protein is Kappa-casein (CSN3).